The sequence spans 240 residues: tRNA (guanine-N(1)-)-methyltransferase (240 aa).

Residues Gly110 and 129-134 (LGDFVL) contribute to the S-adenosyl-L-methionine site.

Belongs to the RNA methyltransferase TrmD family. In terms of assembly, homodimer.

The protein resides in the cytoplasm. It carries out the reaction guanosine(37) in tRNA + S-adenosyl-L-methionine = N(1)-methylguanosine(37) in tRNA + S-adenosyl-L-homocysteine + H(+). Functionally, specifically methylates guanosine-37 in various tRNAs. The protein is tRNA (guanine-N(1)-)-methyltransferase of Clostridium botulinum (strain 657 / Type Ba4).